The chain runs to 132 residues: Small ribosomal subunit protein uS8 (132 aa).

This sequence belongs to the universal ribosomal protein uS8 family. Part of the 30S ribosomal subunit. Contacts proteins S5 and S12.

In terms of biological role, one of the primary rRNA binding proteins, it binds directly to 16S rRNA central domain where it helps coordinate assembly of the platform of the 30S subunit. The protein is Small ribosomal subunit protein uS8 of Tropheryma whipplei (strain Twist) (Whipple's bacillus).